The following is a 798-amino-acid chain: Gelsolin (798 aa).

Residues 1–28 form the signal peptide; it reads MDASGAATMAVLSSLLVFLALSSSLCSA. The actin-severing stretch occupies residues 57 to 181; that stretch reads RVMHPSFANA…YEQGGVGTGF (125 aa). Residues 78-131 form a Gelsolin-like 1 repeat; that stretch reads ENFEPVIYPKTNYGKFYTGDSFIVLNTIENKKDKKLSWDVHFWLGLETSTDEAG. Tyrosine 90 carries the phosphotyrosine; by SRC modification. Positions 128–131 are actin-actin interfilament contact point; sequence DEAG. Residues 167–174 and 193–201 each bind a 1,2-diacyl-sn-glycero-3-phospho-(1D-myo-inositol-4,5-bisphosphate); these read KNGIRYEQ and RLFQVKGKR. 4 Gelsolin-like repeats span residues 203 to 243, 322 to 365, 474 to 524, and 583 to 625; these read VRVR…VEKL, LKVD…KEKT, IVVS…AARK, and VHAS…FEKQ. The interval 451 to 792 is actin-binding, Ca-sensitive; the sequence is MPDHGQNVIE…SYEDMKQLVI (342 aa). Aspartate 599 contacts Ca(2+). Tyrosine 612 is subject to Phosphotyrosine; by SRC. Glutamate 623 provides a ligand contact to Ca(2+). Tyrosine 662 is modified (phosphotyrosine; by SRC). The Gelsolin-like 6 repeat unit spans residues 689 to 730; the sequence is LKVEEVAQYEQEDLDSDDIMLLDAGDEIYLWVGYGVSEEENG. Positions 705, 706, and 728 each coordinate Ca(2+).

It belongs to the villin/gelsolin family. As to quaternary structure, binds to actin and to fibronectin. As to expression, isoform 1 and isoform 2 are ubiquitously expressed in early embryo. Isoform 1 is expressed in the fat body, and is abundant in hemolymph. Isoform 2 is expressed in parts of the gut.

It localises to the cytoplasm. The protein resides in the cytoskeleton. It is found in the secreted. In terms of biological role, calcium-regulated, actin-modulating protein that binds to the plus (or barbed) ends of actin monomers or filaments, preventing monomer exchange (end-blocking or capping). It can promote the assembly of monomers into filaments (nucleation) as well as sever filaments already formed. The chain is Gelsolin (Gel) from Drosophila melanogaster (Fruit fly).